Reading from the N-terminus, the 446-residue chain is Gamma-glutamyl phosphate reductase (446 aa).

Belongs to the gamma-glutamyl phosphate reductase family.

It is found in the cytoplasm. The enzyme catalyses L-glutamate 5-semialdehyde + phosphate + NADP(+) = L-glutamyl 5-phosphate + NADPH + H(+). It participates in amino-acid biosynthesis; L-proline biosynthesis; L-glutamate 5-semialdehyde from L-glutamate: step 2/2. Its function is as follows. Catalyzes the NADPH-dependent reduction of L-glutamate 5-phosphate into L-glutamate 5-semialdehyde and phosphate. The product spontaneously undergoes cyclization to form 1-pyrroline-5-carboxylate. In Sulfurihydrogenibium sp. (strain YO3AOP1), this protein is Gamma-glutamyl phosphate reductase.